A 661-amino-acid chain; its full sequence is Sperm transmembrane protein 9 (661 aa).

An N-terminal signal peptide occupies residues 1 to 16; the sequence is MNVILVLVVLFFAGDC. At 17-618 the chain is on the extracellular side; the sequence is AKIRKIIDFL…MTNRLMKNYE (602 aa). Residues 52-90 form the EGF-like 1 domain; sequence NFNPCLENPKICSNRGKCLHENGNFYCICPVTHYGKTCE. Cystine bridges form between Cys-56–Cys-69, Cys-63–Cys-78, and Cys-80–Cys-89. 4 N-linked (GlcNAc...) asparagine glycosylation sites follow: Asn-105, Asn-106, Asn-134, and Asn-190. The EGF-like 2 domain occupies 210 to 259; it reads QISACFDTQCDNGGICEDVVDWKTKTVTATCKCPSAIELIGGTVTGENCE. 3 disulfides stabilise this stretch: Cys-214/Cys-225, Cys-219/Cys-240, and Cys-242/Cys-258. Residues Asn-279, Asn-290, Asn-316, and Asn-338 are each glycosylated (N-linked (GlcNAc...) asparagine). The Cell attachment site signature appears at 377 to 379; sequence RGD. 3 consecutive EGF-like domains span residues 377–414, 519–557, and 559–600; these read RGDR…EKCE, HTNP…SLCE, and VDDS…LDCN. 9 disulfides stabilise this stretch: Cys-385–Cys-402, Cys-393–Cys-404, Cys-413–Cys-419, Cys-523–Cys-534, Cys-528–Cys-545, Cys-547–Cys-556, Cys-563–Cys-576, Cys-571–Cys-588, and Cys-590–Cys-599. Asn-549 carries N-linked (GlcNAc...) asparagine glycosylation. The chain crosses the membrane as a helical span at residues 619–639; the sequence is FSLPLVACFVSLAILLPVIVI. At 640–661 the chain is on the cytoplasmic side; the sequence is SRRRQGRVEEAKKTSEVKTENP.

In terms of tissue distribution, expressed in spermatids, during spermogenesis expression is primarily localized to the pseudopod.

It is found in the cytoplasm. Its subcellular location is the membrane. Functionally, required for fertilization. May be required for cell adhesion and/or function as a signaling molecule. The sequence is that of Sperm transmembrane protein 9 (spe-9) from Caenorhabditis elegans.